A 353-amino-acid chain; its full sequence is uncharacterized protein (353 aa).

This is an uncharacterized protein from Methanocaldococcus jannaschii (strain ATCC 43067 / DSM 2661 / JAL-1 / JCM 10045 / NBRC 100440) (Methanococcus jannaschii).